Consider the following 52-residue polypeptide: U-scutigerotoxin(01)-Tl1a (52 aa).

Residues 1 to 25 (MLAKAMSLLMMFLLVLVIGSVMVSA) form the signal peptide.

Belongs to the scutigerotoxin-01 family. Contains 1 disulfide bond. As to expression, expressed by the venom gland.

It localises to the secreted. In Thereuopoda longicornis (Long-legged centipede), this protein is U-scutigerotoxin(01)-Tl1a.